A 552-amino-acid chain; its full sequence is Non-structural protein NS1 (552 aa).

Belongs to the orbivirus non-structural protein NS1 family.

In Antilocapra americana (Pronghorn), this protein is Non-structural protein NS1 (Segment-5).